The chain runs to 227 residues: Ubiquitin domain-containing protein 1 (227 aa).

Residues 1–14 (MGGCVGRERAETRG) are compositionally biased toward basic and acidic residues. Positions 1-45 (MGGCVGRERAETRGRGSRTQRKRGGRNEPLKKDKPKWKSDYPMTE) are disordered. A compositionally biased stretch (basic residues) spans 15-24 (RGSRTQRKRG). Basic and acidic residues predominate over residues 25 to 39 (GRNEPLKKDKPKWKS). A Ubiquitin-like domain is found at 150 to 225 (FQLKVRLSTG…IQVIVNQPAP (76 aa)).

In terms of biological role, may be involved in the regulation of cellular senescence through a positive feedback loop with TP53. The protein is Ubiquitin domain-containing protein 1 (ubtd1) of Danio rerio (Zebrafish).